The sequence spans 249 residues: ATP synthase subunit a (249 aa).

5 helical membrane passes run 35–55 (ILLT…ISSL), 92–112 (VPFI…GALV), 131–151 (INTT…AGIS), 187–209 (LFGN…PLFI), and 221–241 (SAIQ…EALE).

Belongs to the ATPase A chain family. In terms of assembly, F-type ATPases have 2 components, CF(1) - the catalytic core - and CF(0) - the membrane proton channel. CF(1) has five subunits: alpha(3), beta(3), gamma(1), delta(1), epsilon(1). CF(0) has four main subunits: a, b, b' and c.

It localises to the cellular thylakoid membrane. Key component of the proton channel; it plays a direct role in the translocation of protons across the membrane. The polypeptide is ATP synthase subunit a (Trichodesmium erythraeum (strain IMS101)).